The following is a 445-amino-acid chain: Exodeoxyribonuclease 7 large subunit (445 aa).

This sequence belongs to the XseA family. Heterooligomer composed of large and small subunits.

The protein resides in the cytoplasm. It carries out the reaction Exonucleolytic cleavage in either 5'- to 3'- or 3'- to 5'-direction to yield nucleoside 5'-phosphates.. Bidirectionally degrades single-stranded DNA into large acid-insoluble oligonucleotides, which are then degraded further into small acid-soluble oligonucleotides. In Shewanella halifaxensis (strain HAW-EB4), this protein is Exodeoxyribonuclease 7 large subunit.